Here is a 320-residue protein sequence, read N- to C-terminus: Pyrroline-5-carboxylate reductase 2 (320 aa).

Position 2 is an N-acetylserine (serine 2). NADP(+) is bound by residues 6–11 (IGAGQL) and serine 34. NADPH is bound by residues alanine 8, glutamine 10, leucine 11, serine 34, glutamate 36, asparagine 56, valine 70, lysine 71, and alanine 97. Residues asparagine 56, 69–72 (AVKP), and 95–97 (CAA) each bind NADP(+). Glutamate 164 is a binding site for L-proline. Asparagine 230 lines the NADPH pocket. 2 residues coordinate L-proline: alanine 237 and threonine 238. A compositionally biased stretch (low complexity) spans 296–305 (TVSTLTPSSP). The interval 296–320 (TVSTLTPSSPGKLLTRSLALGGKKD) is disordered. Position 304 is a phosphoserine (serine 304).

It belongs to the pyrroline-5-carboxylate reductase family. In terms of assembly, homodecamer; composed of 5 homodimers. Interacts with LTO1.

Its subcellular location is the cytoplasm. It is found in the mitochondrion. The enzyme catalyses L-proline + NADP(+) = (S)-1-pyrroline-5-carboxylate + NADPH + 2 H(+). It carries out the reaction L-proline + NAD(+) = (S)-1-pyrroline-5-carboxylate + NADH + 2 H(+). It functions in the pathway amino-acid biosynthesis; L-proline biosynthesis; L-proline from L-glutamate 5-semialdehyde: step 1/1. In terms of biological role, oxidoreductase that catalyzes the last step in proline biosynthesis, which corresponds to the reduction of pyrroline-5-carboxylate to L-proline using NAD(P)H. At physiologic concentrations, has higher specific activity in the presence of NADH. Involved in cellular response to oxidative stress. In some cell types, such as erythrocytes, its primary function may be the generation of NADP(+). The chain is Pyrroline-5-carboxylate reductase 2 (PYCR2) from Pongo abelii (Sumatran orangutan).